We begin with the raw amino-acid sequence, 473 residues long: Probable ribonuclease FAU-1 (473 aa).

It belongs to the FAU-1 family.

Probable RNase involved in rRNA stability through maturation and/or degradation of precursor rRNAs. Binds to RNA in loop regions with AU-rich sequences. The sequence is that of Probable ribonuclease FAU-1 from Hyperthermus butylicus (strain DSM 5456 / JCM 9403 / PLM1-5).